Consider the following 448-residue polypeptide: Adenosylhomocysteinase (448 aa).

Substrate contacts are provided by threonine 61, aspartate 136, and glutamate 161. 162-164 is a binding site for NAD(+); that stretch reads TTA. 2 residues coordinate substrate: lysine 191 and aspartate 195. Residues asparagine 196, 225–230, glutamate 248, asparagine 283, 304–306, and asparagine 360 each bind NAD(+); these read GYGDVG and IGH.

Belongs to the adenosylhomocysteinase family. NAD(+) is required as a cofactor.

Its subcellular location is the cytoplasm. It carries out the reaction S-adenosyl-L-homocysteine + H2O = L-homocysteine + adenosine. It functions in the pathway amino-acid biosynthesis; L-homocysteine biosynthesis; L-homocysteine from S-adenosyl-L-homocysteine: step 1/1. In terms of biological role, may play a key role in the regulation of the intracellular concentration of adenosylhomocysteine. The protein is Adenosylhomocysteinase of Rhodopirellula baltica (strain DSM 10527 / NCIMB 13988 / SH1).